The following is a 208-amino-acid chain: Imidazoleglycerol-phosphate dehydratase (208 aa).

A disordered region spans residues 1-22 (MTRRAAVKAPRAGAAARRGSVA). Over residues 7 to 19 (VKAPRAGAAARRG) the composition is skewed to low complexity.

This sequence belongs to the imidazoleglycerol-phosphate dehydratase family.

It is found in the cytoplasm. The enzyme catalyses D-erythro-1-(imidazol-4-yl)glycerol 3-phosphate = 3-(imidazol-4-yl)-2-oxopropyl phosphate + H2O. The protein operates within amino-acid biosynthesis; L-histidine biosynthesis; L-histidine from 5-phospho-alpha-D-ribose 1-diphosphate: step 6/9. This Anaeromyxobacter dehalogenans (strain 2CP-C) protein is Imidazoleglycerol-phosphate dehydratase.